Here is a 483-residue protein sequence, read N- to C-terminus: MEYEAVIGLEVHVQLNTKTKAFCSCPNTFGAPANTLTCPRCQAHPGTLPIVNKEMVHKTIKAGLATNCTIQKKSRFARKHYFYPDLPSYYQITQMDEPICTEGHLDITVLNDDGSSYNKSIRINRIHMEEDAGKLVHDDTGRPLSYVDLNRAGCCLIECVSEPDISTGEEAYQYLTELKKIFKYIDVSDCNMEEGSLRCDANVSIRPKGSTELGTKTEVKNMNSFRNVRLAIDYEIKRQIKALNNGEKILQETRLYDAKENTTKGMRSKEGAADYRYFPDPDIPLLVLKDEEIEQAKKELPELPQQKRERLKKDYDLPDQDIVVLTEDAALADYYESAVKAYPKQPKKISNWIMVEVNAYLNKKLQTIKDFKPKAEHIAEIFKLIDEGVISGKIAKEIFEDMCETGEAPSAIVEKKGIKQVSDTGELETIIRKVLEENPKSVADFKAGKEKSFGFLVGQTMKATKGQGNPKLVNEVLRKILSE.

Belongs to the GatB/GatE family. GatB subfamily. As to quaternary structure, heterotrimer of A, B and C subunits.

The enzyme catalyses L-glutamyl-tRNA(Gln) + L-glutamine + ATP + H2O = L-glutaminyl-tRNA(Gln) + L-glutamate + ADP + phosphate + H(+). It catalyses the reaction L-aspartyl-tRNA(Asn) + L-glutamine + ATP + H2O = L-asparaginyl-tRNA(Asn) + L-glutamate + ADP + phosphate + 2 H(+). Allows the formation of correctly charged Asn-tRNA(Asn) or Gln-tRNA(Gln) through the transamidation of misacylated Asp-tRNA(Asn) or Glu-tRNA(Gln) in organisms which lack either or both of asparaginyl-tRNA or glutaminyl-tRNA synthetases. The reaction takes place in the presence of glutamine and ATP through an activated phospho-Asp-tRNA(Asn) or phospho-Glu-tRNA(Gln). The sequence is that of Aspartyl/glutamyl-tRNA(Asn/Gln) amidotransferase subunit B from Brachyspira hyodysenteriae (strain ATCC 49526 / WA1).